The sequence spans 600 residues: Elongation factor 4 (600 aa).

In terms of domain architecture, tr-type G spans 5 to 187; the sequence is KYIRNFSIIA…AIVNKLHPPK (183 aa). Residues 17–22 and 134–137 each bind GTP; these read DHGKST and NKID.

The protein belongs to the TRAFAC class translation factor GTPase superfamily. Classic translation factor GTPase family. LepA subfamily.

It is found in the cell inner membrane. The catalysed reaction is GTP + H2O = GDP + phosphate + H(+). Its function is as follows. Required for accurate and efficient protein synthesis under certain stress conditions. May act as a fidelity factor of the translation reaction, by catalyzing a one-codon backward translocation of tRNAs on improperly translocated ribosomes. Back-translocation proceeds from a post-translocation (POST) complex to a pre-translocation (PRE) complex, thus giving elongation factor G a second chance to translocate the tRNAs correctly. Binds to ribosomes in a GTP-dependent manner. The chain is Elongation factor 4 from Rickettsia akari (strain Hartford).